A 146-amino-acid polypeptide reads, in one-letter code: Large ribosomal subunit protein uL11 (146 aa).

It belongs to the universal ribosomal protein uL11 family. In terms of assembly, part of the ribosomal stalk of the 50S ribosomal subunit. Interacts with L10 and the large rRNA to form the base of the stalk. L10 forms an elongated spine to which L12 dimers bind in a sequential fashion forming a multimeric L10(L12)X complex. One or more lysine residues are methylated.

Its function is as follows. Forms part of the ribosomal stalk which helps the ribosome interact with GTP-bound translation factors. The protein is Large ribosomal subunit protein uL11 of Salinibacter ruber (strain DSM 13855 / M31).